Consider the following 481-residue polypeptide: O-acetyltransferase andG (481 aa).

Belongs to the fumigaclavine B O-acetyltransferase family. As to quaternary structure, monomer.

Its pathway is secondary metabolite biosynthesis; terpenoid biosynthesis. O-acetyltransferase; part of the gene cluster that mediates the biosynthesis of anditomin, a fungal meroterpenoid. The first step of the pathway is the synthesis of 3,5-dimethylorsellinic acid (DMOA) by the polyketide synthase andM. DMOA is then converted to the phthalide compound 5,7-dihydroxy-4,6-dimethylphthalide (DHDMP) by the cytochrome P450 monooxygenase andK, which is further prenylated by the prenyltransferase andD to yield farnesyl-DHDMP. Further epoxidation by the FAD-dependent monooxygenase andE leads to epoxyfarnesyl-DHDMP. The next step involves the terpene cyclase andB that converts epoxyfarnesyl-DHDMP into preandiloid A through opening of the epoxide ring followed by the cyclization of the farnesyl moiety. Preandiloid A is in turn oxidized at the C-3 hydroxyl group to yield preandiloid B by the dehydrogenase andC. The dioxygenase andA is solely responsible for the dehydrogenation of preandiloid B leading to the enone preandiloid C, as well as for the intriguing structural rearrangement to generate the bicyclo[2.2.2]octane core, transforming preandiloid C into andiconin. FAD-binding monooxygenase andJ then produces andilesin D which is reduced by dehydrogenase andI to yield andilesin A. Action of acetyltransferase andG followed by a spontaneous acetate elimination leads then to andilesin B, which is in turn substrate of the short chain dehydrogenase andH to yield andilesin C. Finally, the dioxygenase andF catalyzes the transformation of andilesin C to anditomin. The chain is O-acetyltransferase andG from Emericella variicolor (Aspergillus stellatus).